The primary structure comprises 242 residues: Protein HTATIP2 (242 aa).

Ala2 bears the N-acetylalanine mark. The segment at 2-25 (AETEALSKLREDFRMQNKSVFILG) is required for interaction with elongation factor EEF1A1. 12 residues coordinate NADPH: Ser27, Gly28, Glu29, Thr30, Arg52, Arg53, Leu92, Gly93, Tyr143, Lys147, Leu170, and Arg178. The active-site Proton acceptor is Tyr143. Lys147 is an active-site residue.

As to quaternary structure, monomer. Forms homodimers during oxidative stress. Interacts (via N-terminus) with elongation factor EEF1A1 (via middle-region); the interaction is direct and competes with EEF1A1 binding to guanyl-nucleotide exchange factor EEF1B2, thereby inhibiting GDP for GTP exchange and reactivation of EEF1A1. Interacts with nuclear transport receptors XPO4, IPO5/RANBP5, IPO7, IPO9 and KPNB1 as well as GCN1L1/GCN1 and LRPPRC probably through their HEAT repeats. Binds NCOA5/CIA.

The protein localises to the cytoplasm. Functionally, represses translation by preventing reactivation of elongation factor eEF1A. May also inhibit nuclear import by competing with nuclear import substrates for binding to a subset of nuclear transport receptors. Has additionally been proposed to act as a redox sensor involved in cellular oxidative stress surveillance. This chain is Protein HTATIP2 (HTATIP2), found in Gorilla gorilla gorilla (Western lowland gorilla).